The sequence spans 192 residues: MSEYLLLLVGTVLVNNFVLVKFLGLCPFMGVSSKLESAIGMSMATTFVLTLASILSYLVDTYLLTPFDLSYLRTMAFILVIAVVVQFTEMLVQKTSAALHRALGIYLPLITTNCAVLGVALLNVNEKHDFIESAIYGFGAAVGFSIVLILFSAMRERLAAADVPAPFKGGAIAMITAGLMSLAFMGFTGLVN.

The next 6 helical transmembrane spans lie at 5–25 (LLLL…FLGL), 39–59 (IGMS…SYLV), 72–92 (LRTM…EMLV), 102–122 (ALGI…VALL), 134–154 (AIYG…FSAM), and 171–191 (AIAM…TGLV).

This sequence belongs to the NqrDE/RnfAE family. In terms of assembly, the complex is composed of six subunits: RnfA, RnfB, RnfC, RnfD, RnfE and RnfG.

Its subcellular location is the cell inner membrane. Functionally, part of a membrane-bound complex that couples electron transfer with translocation of ions across the membrane. This is Ion-translocating oxidoreductase complex subunit A from Shewanella loihica (strain ATCC BAA-1088 / PV-4).